A 122-amino-acid chain; its full sequence is Large ribosomal subunit protein uL14c (122 aa).

It belongs to the universal ribosomal protein uL14 family. As to quaternary structure, part of the 50S ribosomal subunit.

Its subcellular location is the plastid. The protein resides in the chloroplast. In terms of biological role, binds to 23S rRNA. This Citrus sinensis (Sweet orange) protein is Large ribosomal subunit protein uL14c.